The sequence spans 319 residues: N-acetylneuraminate lyase (319 aa).

Threonine 51 and threonine 52 together coordinate aceneuramate. Catalysis depends on tyrosine 143, which acts as the Proton donor. Catalysis depends on lysine 173, which acts as the Schiff-base intermediate with substrate. Serine 175, glycine 199, aspartate 201, glutamate 202, and serine 218 together coordinate aceneuramate.

It belongs to the DapA family. NanA subfamily. As to quaternary structure, homotetramer.

It is found in the cytoplasm. It carries out the reaction aceneuramate = aldehydo-N-acetyl-D-mannosamine + pyruvate. The protein operates within amino-sugar metabolism; N-acetylneuraminate degradation. Its function is as follows. Catalyzes the cleavage of N-acetylneuraminic acid (sialic acid) to form pyruvate and N-acetylmannosamine via a Schiff base intermediate. It prevents sialic acids from being recycled and returning to the cell surface. Involved in the N-glycolylneuraminic acid (Neu5Gc) degradation pathway. This Sus scrofa (Pig) protein is N-acetylneuraminate lyase.